A 370-amino-acid chain; its full sequence is S-adenosylmethionine decarboxylase proenzyme (370 aa).

Residue phenylalanine 28 participates in substrate binding. Catalysis depends on residues glutamate 29 and glutamate 32. A substrate-binding site is contributed by glutamate 85. The active-site Schiff-base intermediate with substrate; via pyruvic acid is the serine 86. The residue at position 86 (serine 86) is a Pyruvic acid (Ser); by autocatalysis. Cysteine 100 (proton donor; for catalytic activity) is an active-site residue. Active-site proton acceptor; for processing activity residues include serine 249 and histidine 262. Position 266 (glutamate 266) interacts with substrate.

It belongs to the eukaryotic AdoMetDC family. As to quaternary structure, forms a heterodimer with catalytically inactive AdoMetDC prozyme; heterodimerization is required to activate AdoMetDC. Pyruvate is required as a cofactor. In terms of processing, is synthesized initially as an inactive proenzyme. Formation of the active enzyme involves a self-maturation process in which the active site pyruvoyl group is generated from an internal serine residue via an autocatalytic post-translational modification. Two non-identical subunits are generated from the proenzyme in this reaction, and the pyruvate is formed at the N-terminus of the alpha chain, which is derived from the carboxyl end of the proenzyme. The post-translation cleavage follows an unusual pathway, termed non-hydrolytic serinolysis, in which the side chain hydroxyl group of the serine supplies its oxygen atom to form the C-terminus of the beta chain, while the remainder of the serine residue undergoes an oxidative deamination to produce ammonia and the pyruvoyl group blocking the N-terminus of the alpha chain.

It carries out the reaction S-adenosyl-L-methionine + H(+) = S-adenosyl 3-(methylsulfanyl)propylamine + CO2. It participates in amine and polyamine biosynthesis; S-adenosylmethioninamine biosynthesis; S-adenosylmethioninamine from S-adenosyl-L-methionine: step 1/1. Its activity is regulated as follows. Allosterically activated by AdoMetDC prozyme. Activated by putrescine and to a lesser extent by spermidine, norspermidine and spermine. Inhibited by 5'-([(Z)-4-amino-2-butenyl]methylamino)-5'-deoxyadenosine (MDL 73811). Functionally, in association with the catalytically inactive AdoMetDC prozyme, catalyzes the decarboxylation of S-adenosyl-L-methionine which is essential for the biosynthesis of the polyamine spermidine. Required for growth and survival during the bloodstream life cycle stage. The protein is S-adenosylmethionine decarboxylase proenzyme of Trypanosoma brucei brucei.